The following is a 583-amino-acid chain: ATP-dependent lipid A-core flippase (583 aa).

The next 7 helical transmembrane spans lie at 18-38, 65-85, 105-127, 143-163, 167-187, 252-272, and 277-297; these read LWPI…TLII, IFMW…MSGF, LLFN…ATLM, GALI…IMMF, WQLS…IKLV, VFEP…LYIA, and VIEM…IALM. One can recognise an ABC transmembrane type-1 domain in the interval 30–312; sequence IIASITLIIN…LTNVSAQFQR (283 aa). The region spanning 344–580 is the ABC transporter domain; the sequence is IIFDNVTFFY…KGVYSQLYKF (237 aa). ATP is bound at residue 378–385; sequence GRSGSGKS.

Belongs to the ABC transporter superfamily. Lipid exporter (TC 3.A.1.106) family. As to quaternary structure, homodimer.

It localises to the cell inner membrane. It carries out the reaction ATP + H2O + lipid A-core oligosaccharideSide 1 = ADP + phosphate + lipid A-core oligosaccharideSide 2.. Functionally, involved in lipopolysaccharide (LPS) biosynthesis. Translocates lipid A-core from the inner to the outer leaflet of the inner membrane. Transmembrane domains (TMD) form a pore in the inner membrane and the ATP-binding domain (NBD) is responsible for energy generation. The sequence is that of ATP-dependent lipid A-core flippase from Blochmanniella floridana.